A 469-amino-acid polypeptide reads, in one-letter code: Adenosylhomocysteinase (469 aa).

Substrate is bound by residues T63, D139, and E164. 165-167 (TTT) provides a ligand contact to NAD(+). 2 residues coordinate substrate: K194 and D198. NAD(+)-binding positions include N199, 228–233 (GYGDVG), E251, N300, 321–323 (IGH), and N375.

The protein belongs to the adenosylhomocysteinase family. NAD(+) serves as cofactor.

It localises to the cytoplasm. The enzyme catalyses S-adenosyl-L-homocysteine + H2O = L-homocysteine + adenosine. Its pathway is amino-acid biosynthesis; L-homocysteine biosynthesis; L-homocysteine from S-adenosyl-L-homocysteine: step 1/1. In terms of biological role, may play a key role in the regulation of the intracellular concentration of adenosylhomocysteine. In Pseudomonas fluorescens (strain Pf0-1), this protein is Adenosylhomocysteinase.